A 152-amino-acid polypeptide reads, in one-letter code: 2-C-methyl-D-erythritol 2,4-cyclodiphosphate synthase (152 aa).

2 residues coordinate a divalent metal cation: Asp8 and His10. Residues 8–10 and 34–35 each bind 4-CDP-2-C-methyl-D-erythritol 2-phosphate; these read DSH and HS. His42 contributes to the a divalent metal cation binding site. 4-CDP-2-C-methyl-D-erythritol 2-phosphate-binding positions include 56–58 and 61–65; these read DIG and FPDTD.

It belongs to the IspF family. As to quaternary structure, homotrimer. A divalent metal cation is required as a cofactor.

The enzyme catalyses 4-CDP-2-C-methyl-D-erythritol 2-phosphate = 2-C-methyl-D-erythritol 2,4-cyclic diphosphate + CMP. It participates in isoprenoid biosynthesis; isopentenyl diphosphate biosynthesis via DXP pathway; isopentenyl diphosphate from 1-deoxy-D-xylulose 5-phosphate: step 4/6. Functionally, involved in the biosynthesis of isopentenyl diphosphate (IPP) and dimethylallyl diphosphate (DMAPP), two major building blocks of isoprenoid compounds. Catalyzes the conversion of 4-diphosphocytidyl-2-C-methyl-D-erythritol 2-phosphate (CDP-ME2P) to 2-C-methyl-D-erythritol 2,4-cyclodiphosphate (ME-CPP) with a corresponding release of cytidine 5-monophosphate (CMP). The chain is 2-C-methyl-D-erythritol 2,4-cyclodiphosphate synthase from Thermus thermophilus (strain ATCC BAA-163 / DSM 7039 / HB27).